The chain runs to 816 residues: Cation/H(+) antiporter 8 (816 aa).

The next 12 membrane-spanning stretches (helical) occupy residues 64 to 84 (PKLE…NILF), 97 to 117 (MMLA…NSII), 127 to 147 (IDVA…LKGV), 163 to 183 (VTGV…FNLK), 197 to 214 (VMLL…ARLL), 227 to 247 (VALS…IANV), 255 to 275 (ADGL…FAVV), 297 to 317 (IHGV…LSQF), 343 to 363 (LESF…MLRT), 382 to 402 (FAVA…SVIV), 413 to 433 (SIIL…FYLF), and 447 to 467 (ILVL…GFLY).

The protein belongs to the monovalent cation:proton antiporter 2 (CPA2) transporter (TC 2.A.37) family. CHX (TC 2.A.37.4) subfamily. Specifically expressed in pollen.

It localises to the membrane. In terms of biological role, may operate as a cation/H(+) antiporter. The chain is Cation/H(+) antiporter 8 (CHX8) from Arabidopsis thaliana (Mouse-ear cress).